Here is a 287-residue protein sequence, read N- to C-terminus: Pirin-1 (287 aa).

Thr2 carries the post-translational modification N-acetylthreonine.

The protein belongs to the pirin family. Interacts with the G protein alpha-1 subunit GPA1. Interacts with NFYB6 and NFYB9.

The protein resides in the nucleus. In terms of biological role, involved in abscisic acid signal transduction. Plays a role in seed germination and early seedling development. Involved in the blue light (BL) signaling. In Arabidopsis thaliana (Mouse-ear cress), this protein is Pirin-1 (PRN1).